The sequence spans 308 residues: Exosporium protein A (308 aa).

It is found in the spore wall. In Clostridium sporogenes (strain ATCC 15579), this protein is Exosporium protein A.